Reading from the N-terminus, the 294-residue chain is Cytidine deaminase (294 aa).

CMP/dCMP-type deaminase domains are found at residues 48-168 (DEDA…FGPK) and 186-294 (LEGD…VLLG). 89-91 (NME) is a binding site for substrate. Position 102 (His-102) interacts with Zn(2+). Residue Glu-104 is the Proton donor of the active site. Zn(2+)-binding residues include Cys-129 and Cys-132.

The protein belongs to the cytidine and deoxycytidylate deaminase family. Homodimer. It depends on Zn(2+) as a cofactor.

The enzyme catalyses cytidine + H2O + H(+) = uridine + NH4(+). The catalysed reaction is 2'-deoxycytidine + H2O + H(+) = 2'-deoxyuridine + NH4(+). Its function is as follows. This enzyme scavenges exogenous and endogenous cytidine and 2'-deoxycytidine for UMP synthesis. In Citrobacter koseri (strain ATCC BAA-895 / CDC 4225-83 / SGSC4696), this protein is Cytidine deaminase.